A 320-amino-acid chain; its full sequence is Histidine decarboxylase proenzyme (320 aa).

The propeptide occupies 2–11 (NKNLEANRNR). Ser98 bears the Pyruvic acid (Ser) mark. The Proton donor role is filled by Glu215.

In terms of assembly, the proenzyme is a hexamer of identical pi chains; each pi chain monomer is cleaved to form a small (or beta) chain and a large (or alpha) chain by non-hydrolytic self-catalysis. Pyruvate serves as cofactor.

The enzyme catalyses L-histidine + H(+) = histamine + CO2. The polypeptide is Histidine decarboxylase proenzyme (hdc) (Clostridium perfringens (strain 13 / Type A)).